Here is a 561-residue protein sequence, read N- to C-terminus: Dihydroxy-acid dehydratase (561 aa).

A [2Fe-2S] cluster-binding site is contributed by C50. D82 is a Mg(2+) binding site. Residue C123 participates in [2Fe-2S] cluster binding. Residues D124 and K125 each contribute to the Mg(2+) site. N6-carboxylysine is present on K125. C195 contacts [2Fe-2S] cluster. E447 provides a ligand contact to Mg(2+). S473 serves as the catalytic Proton acceptor.

It belongs to the IlvD/Edd family. In terms of assembly, homodimer. [2Fe-2S] cluster serves as cofactor. Mg(2+) is required as a cofactor.

It catalyses the reaction (2R)-2,3-dihydroxy-3-methylbutanoate = 3-methyl-2-oxobutanoate + H2O. The enzyme catalyses (2R,3R)-2,3-dihydroxy-3-methylpentanoate = (S)-3-methyl-2-oxopentanoate + H2O. It functions in the pathway amino-acid biosynthesis; L-isoleucine biosynthesis; L-isoleucine from 2-oxobutanoate: step 3/4. It participates in amino-acid biosynthesis; L-valine biosynthesis; L-valine from pyruvate: step 3/4. In terms of biological role, functions in the biosynthesis of branched-chain amino acids. Catalyzes the dehydration of (2R,3R)-2,3-dihydroxy-3-methylpentanoate (2,3-dihydroxy-3-methylvalerate) into 2-oxo-3-methylpentanoate (2-oxo-3-methylvalerate) and of (2R)-2,3-dihydroxy-3-methylbutanoate (2,3-dihydroxyisovalerate) into 2-oxo-3-methylbutanoate (2-oxoisovalerate), the penultimate precursor to L-isoleucine and L-valine, respectively. The polypeptide is Dihydroxy-acid dehydratase (Rippkaea orientalis (strain PCC 8801 / RF-1) (Cyanothece sp. (strain PCC 8801))).